The following is a 68-amino-acid chain: Large ribosomal subunit protein bL35 (68 aa).

It belongs to the bacterial ribosomal protein bL35 family.

The chain is Large ribosomal subunit protein bL35 from Orientia tsutsugamushi (strain Ikeda) (Rickettsia tsutsugamushi).